The following is a 40-amino-acid chain: Spodomicin (40 aa).

Disulfide bonds link C6-C20, C10-C32, and C21-C39.

As to quaternary structure, monomer. In terms of processing, contains three disulfide bonds. As to expression, hemolymph.

It is found in the secreted. Its function is as follows. Fungicide. In Spodoptera littoralis (Egyptian cotton leafworm), this protein is Spodomicin.